We begin with the raw amino-acid sequence, 346 residues long: Deoxyhypusine hydroxylase (346 aa).

5 HEAT-like PBS-type repeats span residues 71–100 (VLLRHEVAYVIGQISNEKCNDILIKLLNDT), 104–133 (LMVRHEAAEGLAAIGSDSNIEVIKKFLNDE), 213–242 (LKLRYEALFKLRDMETDVSINALGEVLIKD), 246–275 (AIFRHEVAFVLGQALHLNSLKYLISSLQNV), and 279–320 (EMVR…SKDA). Fe cation is bound by residues His75, His108, and Glu109. Fe cation is bound by residues His250, His283, and Glu284.

This sequence belongs to the deoxyhypusine hydroxylase family. The cofactor is Fe(2+).

It carries out the reaction [eIF5A protein]-deoxyhypusine + AH2 + O2 = [eIF5A protein]-hypusine + A + H2O. Its pathway is protein modification; eIF5A hypusination. Its function is as follows. Catalyzes the hydroxylation of the N(6)-(4-aminobutyl)-L-lysine intermediate produced by deoxyhypusine synthase/DHPS on a critical lysine of the eukaryotic translation initiation factor 5A/eIF-5A. This is the second step of the post-translational modification of that lysine into an unusual amino acid residue named hypusine. Hypusination is unique to mature eIF-5A factor and is essential for its function. The sequence is that of Deoxyhypusine hydroxylase from Plasmodium vivax (strain Salvador I).